The primary structure comprises 122 residues: Large ribosomal subunit protein uL14 (122 aa).

The protein belongs to the universal ribosomal protein uL14 family. As to quaternary structure, part of the 50S ribosomal subunit. Forms a cluster with proteins L3 and L19. In the 70S ribosome, L14 and L19 interact and together make contacts with the 16S rRNA in bridges B5 and B8.

In terms of biological role, binds to 23S rRNA. Forms part of two intersubunit bridges in the 70S ribosome. In Chlorobaculum parvum (strain DSM 263 / NCIMB 8327) (Chlorobium vibrioforme subsp. thiosulfatophilum), this protein is Large ribosomal subunit protein uL14.